The primary structure comprises 1265 residues: Methionine synthase (1265 aa).

The region spanning 19–338 (QDEIEAILQE…DHIREIAEAV (320 aa)) is the Hcy-binding domain. Cysteine 260, cysteine 323, and cysteine 324 together coordinate Zn(2+). Residues 371–632 (FVNIGERCNV…IHKELLQLCE (262 aa)) form the Pterin-binding domain. (6S)-5,6,7,8-tetrahydrofolate-binding positions include 382–384 (GSR), aspartate 449, asparagine 470, aspartate 537, asparagine 579, arginine 585, and arginine 591. The B12-binding N-terminal domain maps to 662–759 (QTDEWRNGPL…FMEKEREETK (98 aa)). Residues glutamate 709, 782 to 786 (GDVHD), histidine 785, serine 830, threonine 834, and alanine 886 each bind methylcob(III)alamin. The B12-binding domain occupies 772–907 (QGTIVLATVK…DENLKDEYFE (136 aa)). One can recognise an AdoMet activation domain in the interval 923-1265 (SLKERRYLTL…LGPILGYDTD (343 aa)). S-adenosyl-L-methionine is bound by residues aspartate 974, arginine 1172, and 1227–1228 (YF). A Phosphothreonine modification is found at threonine 1264.

The protein belongs to the vitamin-B12 dependent methionine synthase family. As to quaternary structure, monomer. Dimer. Forms a multiprotein complex with MMACHC, MMADHC and MTRR. Methylcob(III)alamin serves as cofactor. Zn(2+) is required as a cofactor.

It localises to the cytoplasm. It carries out the reaction (6S)-5-methyl-5,6,7,8-tetrahydrofolate + L-homocysteine = (6S)-5,6,7,8-tetrahydrofolate + L-methionine. Its pathway is amino-acid biosynthesis; L-methionine biosynthesis via de novo pathway; L-methionine from L-homocysteine (MetH route): step 1/1. In terms of biological role, catalyzes the transfer of a methyl group from methylcob(III)alamin (MeCbl) to homocysteine, yielding enzyme-bound cob(I)alamin and methionine in the cytosol. MeCbl is an active form of cobalamin (vitamin B12) used as a cofactor for methionine biosynthesis. Cob(I)alamin form is regenerated to MeCbl by a transfer of a methyl group from 5-methyltetrahydrofolate. The processing of cobalamin in the cytosol occurs in a multiprotein complex composed of at least MMACHC, MMADHC, MTRR (methionine synthase reductase) and MTR which may contribute to shuttle safely and efficiently cobalamin towards MTR in order to produce methionine. This Bos taurus (Bovine) protein is Methionine synthase (MTR).